An 89-amino-acid chain; its full sequence is Small ribosomal subunit protein uS15 (89 aa).

It belongs to the universal ribosomal protein uS15 family. Part of the 30S ribosomal subunit. Forms a bridge to the 50S subunit in the 70S ribosome, contacting the 23S rRNA.

Its function is as follows. One of the primary rRNA binding proteins, it binds directly to 16S rRNA where it helps nucleate assembly of the platform of the 30S subunit by binding and bridging several RNA helices of the 16S rRNA. Functionally, forms an intersubunit bridge (bridge B4) with the 23S rRNA of the 50S subunit in the ribosome. This Bordetella parapertussis (strain 12822 / ATCC BAA-587 / NCTC 13253) protein is Small ribosomal subunit protein uS15.